The following is a 540-amino-acid chain: Cytochrome P450 monooxygenase ptmG (540 aa).

A glycan (N-linked (GlcNAc...) asparagine) is linked at Asn17. 2 helical membrane-spanning segments follow: residues 20–40 (VMTL…YICI) and 325–345 (AAFL…FLLL). Residue Cys474 participates in heme binding.

It belongs to the cytochrome P450 family. It depends on heme as a cofactor.

The protein localises to the membrane. It participates in secondary metabolite biosynthesis. In terms of biological role, cytochrome P450 monooxygenase; part of the gene cluster that mediates the biosynthesis of the indole diterpenes penitrems. The geranylgeranyl diphosphate (GGPP) synthase ptmG catalyzes the first step in penitrem biosynthesis via conversion of farnesyl pyrophosphate and isopentyl pyrophosphate into geranylgeranyl pyrophosphate (GGPP). Condensation of indole-3-glycerol phosphate with GGPP by the prenyl transferase ptmC then forms 3-geranylgeranylindole (3-GGI). Epoxidation by the FAD-dependent monooxygenase ptmM leads to a epoxidized-GGI that is substrate of the terpene cyclase ptmB for cyclization to yield paspaline. Paspaline is subsequently converted to 13-desoxypaxilline by the cytochrome P450 monooxygenase ptmP, the latter being then converted to paxilline by the cytochrome P450 monooxygenase ptmQ. Paxilline is converted to beta-paxitriol via C-10 ketoreduction by the short-chain dehydrogenase ptmH which can be monoprenylated at the C-20 by the indole diterpene prenyltransferase ptmD. A two-step elimination (acetylation and elimination) process performed by the O-acetyltransferase ptmV and ptmI leads to the production of the prenylated form of penijanthine. The FAD-linked oxidoreductase ptmO then converts the prenylated form of penijanthine into PC-M5 which is in turn transformed into PC-M4 by the aromatic dimethylallyltransferase ptmE. Five sequential oxidative transformations performed by the cytochrome P450 monooxygenases ptmK, ptmU, ptmL, ptmN and ptmJ yield the various penitrem compounds. PtmK, ptmU and ptmM are involved in the formation of the key bicyclic ring of penitrem C via the formation of the intermediates secopenitrem D and penitrem D. PtmL catalyzes the epoxidation of penitrem D and C to yield penitrem B and F, respectively. PtmJ catalyzes the last benzylic hydroxylation to convert penitrem B to prenitrem E and penitrem F to penitrem A. This is Cytochrome P450 monooxygenase ptmG from Penicillium ochrochloron.